The following is a 131-amino-acid chain: Aspartate 1-decarboxylase (131 aa).

Ser25 serves as the catalytic Schiff-base intermediate with substrate; via pyruvic acid. At Ser25 the chain carries Pyruvic acid (Ser). Thr57 contacts substrate. Catalysis depends on Tyr58, which acts as the Proton donor. 73-75 (GAA) contacts substrate.

This sequence belongs to the PanD family. In terms of assembly, heterooctamer of four alpha and four beta subunits. Requires pyruvate as cofactor. In terms of processing, is synthesized initially as an inactive proenzyme, which is activated by self-cleavage at a specific serine bond to produce a beta-subunit with a hydroxyl group at its C-terminus and an alpha-subunit with a pyruvoyl group at its N-terminus.

The protein resides in the cytoplasm. The catalysed reaction is L-aspartate + H(+) = beta-alanine + CO2. Its pathway is cofactor biosynthesis; (R)-pantothenate biosynthesis; beta-alanine from L-aspartate: step 1/1. Its function is as follows. Catalyzes the pyruvoyl-dependent decarboxylation of aspartate to produce beta-alanine. This Acaryochloris marina (strain MBIC 11017) protein is Aspartate 1-decarboxylase.